Reading from the N-terminus, the 385-residue chain is Glucans biosynthesis protein C (385 aa).

The next 10 helical transmembrane spans lie at Ala-17 to Trp-37, Met-60 to Leu-80, Val-91 to Gln-111, Ile-137 to Phe-157, Lys-173 to Ile-193, Phe-212 to Ile-232, Leu-239 to Leu-259, Thr-274 to Gly-294, Ala-311 to Thr-331, and Trp-338 to Ile-358.

This sequence belongs to the acyltransferase 3 family. OpgC subfamily.

It localises to the cell membrane. Its pathway is glycan metabolism; osmoregulated periplasmic glucan (OPG) biosynthesis. Necessary for the succinyl substitution of periplasmic glucans. Could catalyze the transfer of succinyl residues from the cytoplasmic side of the membrane to the nascent glucan backbones on the periplasmic side of the membrane. In Escherichia coli O6:K15:H31 (strain 536 / UPEC), this protein is Glucans biosynthesis protein C.